Reading from the N-terminus, the 249-residue chain is Chitooligosaccharide deacetylase (249 aa).

The Mg(2+) site is built by His-61 and His-125.

It belongs to the YdjC deacetylase family. ChbG subfamily. In terms of assembly, homodimer. Mg(2+) is required as a cofactor.

It is found in the cytoplasm. The catalysed reaction is N,N'-diacetylchitobiose + H2O = N-acetyl-beta-D-glucosaminyl-(1-&gt;4)-D-glucosamine + acetate. It catalyses the reaction diacetylchitobiose-6'-phosphate + H2O = N'-monoacetylchitobiose-6'-phosphate + acetate. Its pathway is glycan degradation; chitin degradation. Functionally, involved in the degradation of chitin. ChbG is essential for growth on the acetylated chitooligosaccharides chitobiose and chitotriose but is dispensable for growth on cellobiose and chitosan dimer, the deacetylated form of chitobiose. Deacetylation of chitobiose-6-P and chitotriose-6-P is necessary for both the activation of the chb promoter by the regulatory protein ChbR and the hydrolysis of phosphorylated beta-glucosides by the phospho-beta-glucosidase ChbF. Catalyzes the removal of only one acetyl group from chitobiose-6-P to yield monoacetylchitobiose-6-P, the inducer of ChbR and the substrate of ChbF. This chain is Chitooligosaccharide deacetylase, found in Escherichia coli O17:K52:H18 (strain UMN026 / ExPEC).